The primary structure comprises 219 residues: Octanoyltransferase (219 aa).

The region spanning 32–207 (ENSQDEIWIV…TLSQELGLDK (176 aa)) is the BPL/LPL catalytic domain. Residues 71-78 (RGGQVTYH), 138-140 (SLG), and 151-153 (GLA) contribute to the substrate site. The Acyl-thioester intermediate role is filled by Cys169.

This sequence belongs to the LipB family.

It localises to the cytoplasm. The enzyme catalyses octanoyl-[ACP] + L-lysyl-[protein] = N(6)-octanoyl-L-lysyl-[protein] + holo-[ACP] + H(+). The protein operates within protein modification; protein lipoylation via endogenous pathway; protein N(6)-(lipoyl)lysine from octanoyl-[acyl-carrier-protein]: step 1/2. In terms of biological role, catalyzes the transfer of endogenously produced octanoic acid from octanoyl-acyl-carrier-protein onto the lipoyl domains of lipoate-dependent enzymes. Lipoyl-ACP can also act as a substrate although octanoyl-ACP is likely to be the physiological substrate. The sequence is that of Octanoyltransferase from Shewanella halifaxensis (strain HAW-EB4).